We begin with the raw amino-acid sequence, 349 residues long: Phosphate acyltransferase (349 aa).

It belongs to the PlsX family. Homodimer. Probably interacts with PlsY.

It is found in the cytoplasm. The enzyme catalyses a fatty acyl-[ACP] + phosphate = an acyl phosphate + holo-[ACP]. It participates in lipid metabolism; phospholipid metabolism. Functionally, catalyzes the reversible formation of acyl-phosphate (acyl-PO(4)) from acyl-[acyl-carrier-protein] (acyl-ACP). This enzyme utilizes acyl-ACP as fatty acyl donor, but not acyl-CoA. This Colwellia psychrerythraea (strain 34H / ATCC BAA-681) (Vibrio psychroerythus) protein is Phosphate acyltransferase.